The following is a 184-amino-acid chain: Oligoribonuclease (184 aa).

The region spanning 8–171 is the Exonuclease domain; that stretch reads LIWIDLEMTG…DDIRESIAEL (164 aa). The active site involves Tyr-129.

The protein belongs to the oligoribonuclease family.

The protein resides in the cytoplasm. Its function is as follows. 3'-to-5' exoribonuclease specific for small oligoribonucleotides. This chain is Oligoribonuclease, found in Pasteurella multocida (strain Pm70).